The chain runs to 247 residues: MYYSIKLRASRDGKHLSGGERIVLKDKIEEAVNQLYRKAEPKDPDEINIKIESIKEKPLVIKSSLKIENIICEDYKSSNQIALEILKRSTGIPVERLKELIDLVHTGSAPDGSNMRGAMIVNQKGERIELDHFRGIRTTTVDFLDRDKILKKLVKKGYTERTVDALCLTTKNMLYPDMIAEYCISDEPDYITGYVSTKDFYYRITPLKSEGNPKGGRIYFVRNSIDLQDFYRFLQEKPVLIEDVGID.

The protein belongs to the BioW family. In terms of assembly, homodimer. The cofactor is Mg(2+).

It catalyses the reaction heptanedioate + ATP + CoA = 6-carboxyhexanoyl-CoA + AMP + diphosphate. It functions in the pathway metabolic intermediate metabolism; pimeloyl-CoA biosynthesis; pimeloyl-CoA from pimelate: step 1/1. Catalyzes the transformation of pimelate into pimeloyl-CoA with concomitant hydrolysis of ATP to AMP. This is 6-carboxyhexanoate--CoA ligase from Persephonella marina (strain DSM 14350 / EX-H1).